Reading from the N-terminus, the 359-residue chain is Alpha-2-HS-glycoprotein (359 aa).

An N-terminal signal peptide occupies residues 1 to 18; it reads MKSFVLLFCLAQLWGCHS. Residues 27–133 enclose the Cystatin fetuin-A-type 1 domain; that stretch reads YKEPACDDPD…QFSVLFTKCD (107 aa). Disulfide bonds link C32/C350, C89/C100, C114/C132, C146/C149, C208/C219, and C230/C248. N99 is a glycosylation site (N-linked (GlcNAc...) asparagine). Residues S134, S135, and S138 each carry the phosphoserine modification. A Cystatin fetuin-A-type 2 domain is found at 144–256; sequence KLCPDCPLLA…TCTLFQTQPV (113 aa). N-linked (GlcNAc...) asparagine glycans are attached at residues N156 and N176. Residues 257-285 are disordered; sequence IPQPQPDGAEAEAPSAVPDAAGPTPSAAG. A glycan (O-linked (GalNAc...) serine) is linked at S271. Residues 276–285 are compositionally biased toward low complexity; that stretch reads AAGPTPSAAG. The O-linked (GalNAc...) threonine glycan is linked to T280. Residues S282 and S296 are each glycosylated (O-linked (GalNAc...) serine). Residue T314 is modified to Phosphothreonine. A phosphoserine mark is found at S316, S320, S323, and S325. T334 carries O-linked (GalNAc...) threonine glycosylation. S341 is a glycosylation site (O-linked (GalNAc...) serine; partial).

This sequence belongs to the fetuin family. In terms of processing, phosphorylated by FAM20C in the extracellular medium. Liver and bone.

Its subcellular location is the secreted. Functionally, promotes endocytosis, possesses opsonic properties and influences the mineral phase of bone. Suggested to have lymphocyte stimulating properties, lipid binding capability and to bind thyroid hormone. This chain is Alpha-2-HS-glycoprotein (AHSG), found in Bos taurus (Bovine).